Reading from the N-terminus, the 245-residue chain is 1-(5-phosphoribosyl)-5-[(5-phosphoribosylamino)methylideneamino] imidazole-4-carboxamide isomerase (245 aa).

The Proton acceptor role is filled by Asp-7. Asp-129 acts as the Proton donor in catalysis.

This sequence belongs to the HisA/HisF family.

It localises to the cytoplasm. It catalyses the reaction 1-(5-phospho-beta-D-ribosyl)-5-[(5-phospho-beta-D-ribosylamino)methylideneamino]imidazole-4-carboxamide = 5-[(5-phospho-1-deoxy-D-ribulos-1-ylimino)methylamino]-1-(5-phospho-beta-D-ribosyl)imidazole-4-carboxamide. The protein operates within amino-acid biosynthesis; L-histidine biosynthesis; L-histidine from 5-phospho-alpha-D-ribose 1-diphosphate: step 4/9. The polypeptide is 1-(5-phosphoribosyl)-5-[(5-phosphoribosylamino)methylideneamino] imidazole-4-carboxamide isomerase (Escherichia coli O81 (strain ED1a)).